Reading from the N-terminus, the 33-residue chain is Antimicrobial peptide MBP-1 (33 aa).

As to expression, predominantly in the embryo portion of the kernel.

It is found in the secreted. In terms of biological role, inhibitor of both bacterial and fungal growth in vitro. The sequence is that of Antimicrobial peptide MBP-1 from Zea mays (Maize).